Reading from the N-terminus, the 313-residue chain is Porphobilinogen deaminase (313 aa).

Cys-242 is modified (S-(dipyrrolylmethanemethyl)cysteine).

The protein belongs to the HMBS family. In terms of assembly, monomer. It depends on dipyrromethane as a cofactor.

The enzyme catalyses 4 porphobilinogen + H2O = hydroxymethylbilane + 4 NH4(+). Its pathway is porphyrin-containing compound metabolism; protoporphyrin-IX biosynthesis; coproporphyrinogen-III from 5-aminolevulinate: step 2/4. Tetrapolymerization of the monopyrrole PBG into the hydroxymethylbilane pre-uroporphyrinogen in several discrete steps. In Escherichia coli (strain K12 / MC4100 / BW2952), this protein is Porphobilinogen deaminase.